A 1203-amino-acid chain; its full sequence is Cation-transporting ATPase catp-5 (1203 aa).

Topologically, residues Met-1–Gln-68 are cytoplasmic. Residues Thr-21–Thr-42 are disordered. A helical membrane pass occupies residues Ile-69 to Val-89. Residues Lys-90–Ala-209 are Extracellular-facing. A helical transmembrane segment spans residues Leu-210–Phe-230. The Cytoplasmic segment spans residues Gln-231–Asn-242. The helical transmembrane segment at Tyr-243 to Tyr-263 threads the bilayer. The Extracellular portion of the chain corresponds to Gln-264–Glu-297. Residues Ile-298–Leu-318 form a helical membrane-spanning segment. The Cytoplasmic portion of the chain corresponds to Leu-319–Asp-414. The chain crosses the membrane as a helical span at residues Val-415 to Ile-435. Residues Glu-436–Ser-451 are Extracellular-facing. A helical transmembrane segment spans residues Leu-452–Ile-472. The Cytoplasmic segment spans residues Asn-473–Ser-935. Residue Asp-503 is the 4-aspartylphosphate intermediate of the active site. Residues Glu-595–His-617 form a disordered region. Mg(2+) is bound by residues Asp-883 and Asp-887. A helical membrane pass occupies residues Tyr-936–Leu-956. The Extracellular segment spans residues Tyr-957 to Asn-962. The chain crosses the membrane as a helical span at residues Ile-963–Leu-983. Residues Gly-984 to Tyr-1007 lie on the Cytoplasmic side of the membrane. The helical transmembrane segment at Phe-1008 to Val-1028 threads the bilayer. The Extracellular segment spans residues Arg-1029–Thr-1046. Residues Met-1047–Tyr-1067 form a helical membrane-spanning segment. Over Ser-1068–Gly-1085 the chain is Cytoplasmic. The chain crosses the membrane as a helical span at residues Ile-1086–Met-1106. The Extracellular segment spans residues Asn-1107–Arg-1120. A helical transmembrane segment spans residues Phe-1121–Phe-1141. Residues Val-1142–Cys-1203 are Cytoplasmic-facing.

It belongs to the cation transport ATPase (P-type) (TC 3.A.3) family. Type V subfamily. As to expression, expressed in the 20 intestinal cells and in the excretory cell.

It is found in the apical cell membrane. The enzyme catalyses ATP + H2O = ADP + phosphate + H(+). In terms of biological role, involved in the uptake and/or transport of polyamines, probably through ATP hydrolysis. This contributes to the maintenance of intracellular polyamine levels. Polyamines are essential for cell proliferation and are implicated in cellular processes, ranging from DNA replication to apoptosis. The protein is Cation-transporting ATPase catp-5 of Caenorhabditis elegans.